An 84-amino-acid polypeptide reads, in one-letter code: DNA-directed RNA polymerase subunit Rpo5 (84 aa).

This sequence belongs to the archaeal Rpo5/eukaryotic RPB5 RNA polymerase subunit family. As to quaternary structure, part of the RNA polymerase complex.

It is found in the cytoplasm. It catalyses the reaction RNA(n) + a ribonucleoside 5'-triphosphate = RNA(n+1) + diphosphate. Functionally, DNA-dependent RNA polymerase (RNAP) catalyzes the transcription of DNA into RNA using the four ribonucleoside triphosphates as substrates. The protein is DNA-directed RNA polymerase subunit Rpo5 of Sulfurisphaera tokodaii (strain DSM 16993 / JCM 10545 / NBRC 100140 / 7) (Sulfolobus tokodaii).